The sequence spans 240 residues: MGRDIMVSLEEAVIARYTSHGEKFEILVDPYLAAKLKEGQNVDFDELLAIEVVFRDASKGEKAPEELLSKIFGTTDVKEIAKKIILKGQVQLTAKQREEIREQKKRQIITIISRNTINPQTDTPHPPHRIEKAMEELRINIDIYKSAEEQVPEIVKKLKKVLPIRFEKRDIAVKIPAEFASKAYNALYQFGAVKQEEWQPDGSLIVLIEIPSGIEAEFYAHLNKITKGNVQTKVVKKYSE.

Belongs to the SDO1/SBDS family.

The polypeptide is Ribosome maturation protein SDO1 homolog (Methanocaldococcus jannaschii (strain ATCC 43067 / DSM 2661 / JAL-1 / JCM 10045 / NBRC 100440) (Methanococcus jannaschii)).